Here is a 235-residue protein sequence, read N- to C-terminus: Sugar fermentation stimulation protein homolog (235 aa).

Belongs to the SfsA family.

The polypeptide is Sugar fermentation stimulation protein homolog (Roseobacter denitrificans (strain ATCC 33942 / OCh 114) (Erythrobacter sp. (strain OCh 114))).